A 103-amino-acid chain; its full sequence is Acylphosphatase-2 (103 aa).

Serine 2 bears the N-acetylserine mark. The 91-residue stretch at 13–103 (SVDYEVFGRV…LDFSGFSTRY (91 aa)) folds into the Acylphosphatase-like domain. Catalysis depends on residues arginine 28 and asparagine 46.

This sequence belongs to the acylphosphatase family.

The enzyme catalyses an acyl phosphate + H2O = a carboxylate + phosphate + H(+). Functionally, its physiological role is not yet clear. The chain is Acylphosphatase-2 (ACYP2) from Gallus gallus (Chicken).